The chain runs to 148 residues: uncharacterized protein (148 aa).

The next 3 membrane-spanning stretches (helical) occupy residues 20 to 42, 52 to 74, and 118 to 135; these read YYSK…IANY, YFLM…VRCY, and IIRY…CTYI.

It is found in the cell membrane. This is an uncharacterized protein from Rickettsia prowazekii (strain Madrid E).